The chain runs to 197 residues: HTH-type transcriptional regulator BetI (197 aa).

Residues 8–68 (PIRRQQLIQA…ATMRHLMNAL (61 aa)) enclose the HTH tetR-type domain. The H-T-H motif DNA-binding region spans 31 to 50 (SIALIARLAGVSNGIISHYF).

Its pathway is amine and polyamine biosynthesis; betaine biosynthesis via choline pathway [regulation]. Its function is as follows. Repressor involved in the biosynthesis of the osmoprotectant glycine betaine. It represses transcription of the choline transporter BetT and the genes of BetAB involved in the synthesis of glycine betaine. The polypeptide is HTH-type transcriptional regulator BetI (Pseudomonas syringae pv. tomato (strain ATCC BAA-871 / DC3000)).